Consider the following 488-residue polypeptide: UDP-N-acetylmuramate--L-alanine ligase (488 aa).

127–133 (GTHGKTT) provides a ligand contact to ATP.

Belongs to the MurCDEF family.

The protein localises to the cytoplasm. The enzyme catalyses UDP-N-acetyl-alpha-D-muramate + L-alanine + ATP = UDP-N-acetyl-alpha-D-muramoyl-L-alanine + ADP + phosphate + H(+). Its pathway is cell wall biogenesis; peptidoglycan biosynthesis. Functionally, cell wall formation. The sequence is that of UDP-N-acetylmuramate--L-alanine ligase from Shewanella sp. (strain MR-4).